A 70-amino-acid polypeptide reads, in one-letter code: uncharacterized protein (70 aa).

This is an uncharacterized protein from Vaccinia virus (strain Copenhagen) (VACV).